The following is a 103-amino-acid chain: UPF0132 membrane protein AF_0105 (103 aa).

3 helical membrane-spanning segments follow: residues 5-25 (VAGA…LLME), 35-55 (AMQS…LSFI), and 58-78 (IGVL…LVCI).

It belongs to the UPF0132 family.

Its subcellular location is the cell membrane. The protein is UPF0132 membrane protein AF_0105 of Archaeoglobus fulgidus (strain ATCC 49558 / DSM 4304 / JCM 9628 / NBRC 100126 / VC-16).